The chain runs to 245 residues: Ubiquinone biosynthesis O-methyltransferase (245 aa).

4 residues coordinate S-adenosyl-L-methionine: arginine 44, glycine 64, aspartate 85, and methionine 129.

The protein belongs to the methyltransferase superfamily. UbiG/COQ3 family.

The enzyme catalyses a 3-demethylubiquinol + S-adenosyl-L-methionine = a ubiquinol + S-adenosyl-L-homocysteine + H(+). It catalyses the reaction a 3-(all-trans-polyprenyl)benzene-1,2-diol + S-adenosyl-L-methionine = a 2-methoxy-6-(all-trans-polyprenyl)phenol + S-adenosyl-L-homocysteine + H(+). The protein operates within cofactor biosynthesis; ubiquinone biosynthesis. Its function is as follows. O-methyltransferase that catalyzes the 2 O-methylation steps in the ubiquinone biosynthetic pathway. The polypeptide is Ubiquinone biosynthesis O-methyltransferase (Proteus mirabilis (strain HI4320)).